Here is a 129-residue protein sequence, read N- to C-terminus: Small ribosomal subunit protein uS8 (129 aa).

Belongs to the universal ribosomal protein uS8 family. Part of the 30S ribosomal subunit. Contacts proteins S5 and S12.

Its function is as follows. One of the primary rRNA binding proteins, it binds directly to 16S rRNA central domain where it helps coordinate assembly of the platform of the 30S subunit. In Mycoplasma capricolum subsp. capricolum (strain California kid / ATCC 27343 / NCTC 10154), this protein is Small ribosomal subunit protein uS8.